The following is a 465-amino-acid chain: Endo-1,3-1,4-beta-glycanase EglC (465 aa).

3 Hemolysin-type calcium-binding repeats span residues 33-50, 105-122, and 123-140; these read YGTAGNDSMWADSSVDVT, FGNSASNIISGGSGSQTI, and NGGAGNDVLTGAGGADTF. Positions 213–462 constitute a GH16 domain; sequence LDRSVLTQTF…YVKAYSLDAD (250 aa). Residue E349 is the Nucleophile of the active site. Catalysis depends on E354, which acts as the Proton donor.

It belongs to the glycosyl hydrolase 16 family.

The protein localises to the secreted. The protein operates within glycan metabolism; exopolysaccharide biosynthesis. In terms of biological role, cleaves high molecular weight succinoglycan to yield LMW succinoglycan. Dynamically regulates the molecular weight distribution of succinoglycan by cleaving nascent succinoglycan only during a limited period after its synthesis, perhaps before it undergoes a time-dependent change in its conformation or aggregation state. In Rhizobium meliloti (strain 1021) (Ensifer meliloti), this protein is Endo-1,3-1,4-beta-glycanase EglC (eglC).